The chain runs to 823 residues: Endoplasmin homolog (823 aa).

Residues 1 to 23 (MRKRTLVSVLFLFSLLFLLPDQG) form the signal peptide. The segment at 29 to 60 (NAEESSDDVTDPPKVEEKIGGHGGLSTDSDVV) is disordered. Over residues 39–48 (DPPKVEEKIG) the composition is skewed to basic and acidic residues. ATP-binding positions include E106, N110, D154, M159, N167, K173, 174–175 (SG), 194–199 (QFGVGF), F199, and T246. An N-linked (GlcNAc...) asparagine glycan is attached at N110. Residues 289–328 (ETEVPVEEDESADEETETTSTEEEKEEDAEEEDGEKKQKT) are disordered. A compositionally biased stretch (acidic residues) spans 290-321 (TEVPVEEDESADEETETTSTEEEKEEDAEEED). N-linked (GlcNAc...) asparagine glycans are attached at residues N452 and N620. Over residues 777 to 792 (VADEEIEAAEEPETSE) the composition is skewed to acidic residues. Residues 777–823 (VADEEIEAAEEPETSEATETKSDDLAGGLNIEAEPVEQQEENTKDEL) are disordered. A Prevents secretion from ER motif is present at residues 820-823 (KDEL).

This sequence belongs to the heat shock protein 90 family. As to quaternary structure, interacts with FKBP42. Interacts with P23-1. In terms of tissue distribution, ubiquitous.

The protein resides in the endoplasmic reticulum lumen. May have a molecular chaperone role in the processing of secreted materials. Required for shoot apical meristem (SAM), root apical meristem (RAM) and floral meristem (FM) formation, probably by regulating the folding of CLAVATA proteins (CLVs). Also involved in pollen tube elongation. Involved in resistance to tunicamycin- or high calcium-induced ER stresses. Possesses ATPase activity. The chain is Endoplasmin homolog from Arabidopsis thaliana (Mouse-ear cress).